The chain runs to 149 residues: Large ribosomal subunit protein bL9 (149 aa).

The protein belongs to the bacterial ribosomal protein bL9 family.

Its function is as follows. Binds to the 23S rRNA. In Aliivibrio salmonicida (strain LFI1238) (Vibrio salmonicida (strain LFI1238)), this protein is Large ribosomal subunit protein bL9.